Consider the following 131-residue polypeptide: Lysozyme C (131 aa).

The C-type lysozyme domain occupies 2–131 (KIYEQCELAR…VSQWIKGCKL (130 aa)). 4 disulfide bridges follow: C7–C129, C31–C117, C66–C82, and C78–C96. Active-site residues include E36 and D54.

It belongs to the glycosyl hydrolase 22 family. In terms of assembly, monomer.

It is found in the secreted. It catalyses the reaction Hydrolysis of (1-&gt;4)-beta-linkages between N-acetylmuramic acid and N-acetyl-D-glucosamine residues in a peptidoglycan and between N-acetyl-D-glucosamine residues in chitodextrins.. Functionally, lysozymes have primarily a bacteriolytic function; those in tissues and body fluids are associated with the monocyte-macrophage system and enhance the activity of immunoagents. Has strong bacteriolytic activity against M.luteus and V.cholerae, weak bacteriolytic activity against P.aeruginosa and no activity against A.hydrophila. This is Lysozyme C (LYZ) from Pelodiscus sinensis (Chinese softshell turtle).